The primary structure comprises 287 residues: ATP synthase gamma chain (287 aa).

This sequence belongs to the ATPase gamma chain family. F-type ATPases have 2 components, CF(1) - the catalytic core - and CF(0) - the membrane proton channel. CF(1) has five subunits: alpha(3), beta(3), gamma(1), delta(1), epsilon(1). CF(0) has three main subunits: a, b and c.

Its subcellular location is the cell inner membrane. Functionally, produces ATP from ADP in the presence of a proton gradient across the membrane. The gamma chain is believed to be important in regulating ATPase activity and the flow of protons through the CF(0) complex. This Klebsiella pneumoniae subsp. pneumoniae (strain ATCC 700721 / MGH 78578) protein is ATP synthase gamma chain.